The chain runs to 412 residues: Serine hydroxymethyltransferase (412 aa).

Residues leucine 117 and 121–123 (GHL) contribute to the (6S)-5,6,7,8-tetrahydrofolate site. Lysine 226 bears the N6-(pyridoxal phosphate)lysine mark. (6S)-5,6,7,8-tetrahydrofolate is bound by residues glutamate 242 and 350–352 (SPF).

Belongs to the SHMT family. In terms of assembly, homodimer. Pyridoxal 5'-phosphate serves as cofactor.

The protein resides in the cytoplasm. The enzyme catalyses (6R)-5,10-methylene-5,6,7,8-tetrahydrofolate + glycine + H2O = (6S)-5,6,7,8-tetrahydrofolate + L-serine. The protein operates within one-carbon metabolism; tetrahydrofolate interconversion. It functions in the pathway amino-acid biosynthesis; glycine biosynthesis; glycine from L-serine: step 1/1. In terms of biological role, catalyzes the reversible interconversion of serine and glycine with tetrahydrofolate (THF) serving as the one-carbon carrier. Appears to be specific for THF as the pteridine substrate, since the use of tetrahydromethanopterin (H4MPT) is much less efficient. Also exhibits THF-independent aldolase activity toward beta-hydroxyamino acids, producing glycine and aldehydes, via a retro-aldol mechanism. Thus, is able to catalyze the cleavage of L-allo-threonine and L-threo-beta-phenylserine. The sequence is that of Serine hydroxymethyltransferase from Methanosarcina barkeri (strain Fusaro / DSM 804).